The chain runs to 348 residues: Probable dual-specificity RNA methyltransferase RlmN (348 aa).

Residue E89 is the Proton acceptor of the active site. The 234-residue stretch at 95 to 328 (HKNRNTVCVS…VTLRISYGSK (234 aa)) folds into the Radical SAM core domain. C102 and C333 are oxidised to a cystine. [4Fe-4S] cluster is bound by residues C109, C113, and C116. S-adenosyl-L-methionine contacts are provided by residues 159-160 (GE), S191, 214-216 (SLH), and N290. The active-site S-methylcysteine intermediate is C333.

This sequence belongs to the radical SAM superfamily. RlmN family. The cofactor is [4Fe-4S] cluster.

It is found in the cytoplasm. It catalyses the reaction adenosine(2503) in 23S rRNA + 2 reduced [2Fe-2S]-[ferredoxin] + 2 S-adenosyl-L-methionine = 2-methyladenosine(2503) in 23S rRNA + 5'-deoxyadenosine + L-methionine + 2 oxidized [2Fe-2S]-[ferredoxin] + S-adenosyl-L-homocysteine. The catalysed reaction is adenosine(37) in tRNA + 2 reduced [2Fe-2S]-[ferredoxin] + 2 S-adenosyl-L-methionine = 2-methyladenosine(37) in tRNA + 5'-deoxyadenosine + L-methionine + 2 oxidized [2Fe-2S]-[ferredoxin] + S-adenosyl-L-homocysteine. In terms of biological role, specifically methylates position 2 of adenine 2503 in 23S rRNA and position 2 of adenine 37 in tRNAs. The polypeptide is Probable dual-specificity RNA methyltransferase RlmN (Dictyoglomus turgidum (strain DSM 6724 / Z-1310)).